The chain runs to 429 residues: Glutamate-1-semialdehyde 2,1-aminomutase (429 aa).

Lysine 272 carries the N6-(pyridoxal phosphate)lysine modification.

This sequence belongs to the class-III pyridoxal-phosphate-dependent aminotransferase family. HemL subfamily. The cofactor is pyridoxal 5'-phosphate.

It localises to the cytoplasm. It catalyses the reaction (S)-4-amino-5-oxopentanoate = 5-aminolevulinate. Its pathway is porphyrin-containing compound metabolism; protoporphyrin-IX biosynthesis; 5-aminolevulinate from L-glutamyl-tRNA(Glu): step 2/2. The polypeptide is Glutamate-1-semialdehyde 2,1-aminomutase (Methanothrix thermoacetophila (strain DSM 6194 / JCM 14653 / NBRC 101360 / PT) (Methanosaeta thermophila)).